Here is a 396-residue protein sequence, read N- to C-terminus: Tryptophan synthase beta chain (396 aa).

Position 90 is an N6-(pyridoxal phosphate)lysine (K90).

It belongs to the TrpB family. In terms of assembly, tetramer of two alpha and two beta chains. Pyridoxal 5'-phosphate serves as cofactor.

The catalysed reaction is (1S,2R)-1-C-(indol-3-yl)glycerol 3-phosphate + L-serine = D-glyceraldehyde 3-phosphate + L-tryptophan + H2O. It participates in amino-acid biosynthesis; L-tryptophan biosynthesis; L-tryptophan from chorismate: step 5/5. The beta subunit is responsible for the synthesis of L-tryptophan from indole and L-serine. In Clostridium kluyveri (strain NBRC 12016), this protein is Tryptophan synthase beta chain.